Consider the following 484-residue polypeptide: Calcium-dependent protein kinase 31 (484 aa).

Gly-2 is lipidated: N-myristoyl glycine. One can recognise a Protein kinase domain in the interval Tyr-28–Met-290. ATP is bound by residues Leu-34–Thr-42 and Lys-57. Asp-156 serves as the catalytic Proton acceptor. Ser-196 carries the phosphoserine modification. The segment at Ala-295–Ile-325 is autoinhibitory domain. 4 EF-hand domains span residues Glu-332–Asn-367, Leu-368–Leu-403, Asp-404–Gly-439, and Ile-444–Leu-474. Residues Asp-345, Asp-347, Ser-349, Thr-351, Glu-356, Asp-381, Asp-383, Asn-385, Thr-387, Glu-392, Asp-417, Asp-419, Asp-421, His-423, Glu-428, Asp-452, Asp-454, Asp-456, Lys-458, and Glu-463 each contribute to the Ca(2+) site.

The protein belongs to the protein kinase superfamily. Ser/Thr protein kinase family. CDPK subfamily.

The protein localises to the membrane. The enzyme catalyses L-seryl-[protein] + ATP = O-phospho-L-seryl-[protein] + ADP + H(+). It catalyses the reaction L-threonyl-[protein] + ATP = O-phospho-L-threonyl-[protein] + ADP + H(+). Activated by calcium. Autophosphorylation may play an important role in the regulation of the kinase activity. Its function is as follows. May play a role in signal transduction pathways that involve calcium as a second messenger. The sequence is that of Calcium-dependent protein kinase 31 (CPK31) from Arabidopsis thaliana (Mouse-ear cress).